Consider the following 483-residue polypeptide: Probable gamma-aminobutyrate transaminase 4 (483 aa).

138–139 (GS) is a pyridoxal 5'-phosphate binding site. Residue Tyr-171 participates in substrate binding. Pyridoxal 5'-phosphate is bound at residue Asp-278. Residue Lys-307 coordinates substrate. Lys-307 is subject to N6-(pyridoxal phosphate)lysine.

Belongs to the class-III pyridoxal-phosphate-dependent aminotransferase family. As to expression, not detected in roots, stems, flowers or leaves of healthy plants.

It is found in the cytoplasm. It catalyses the reaction 4-aminobutanoate + pyruvate = succinate semialdehyde + L-alanine. The enzyme catalyses 4-aminobutanoate + glyoxylate = succinate semialdehyde + glycine. In terms of biological role, transaminase that degrades gamma-amino butyric acid (GABA). This is Probable gamma-aminobutyrate transaminase 4 (GABA-T) from Oryza sativa subsp. japonica (Rice).